The chain runs to 132 residues: Small ribosomal subunit protein uS12 (132 aa).

Aspartate 89 is subject to 3-methylthioaspartic acid. A disordered region spans residues 106–132; the sequence is GVKDRKKSRSKYGTKKPKEAAKTAAKK. Over residues 109–120 the composition is skewed to basic residues; that stretch reads DRKKSRSKYGTK.

This sequence belongs to the universal ribosomal protein uS12 family. Part of the 30S ribosomal subunit. Contacts proteins S8 and S17. May interact with IF1 in the 30S initiation complex.

Functionally, with S4 and S5 plays an important role in translational accuracy. Interacts with and stabilizes bases of the 16S rRNA that are involved in tRNA selection in the A site and with the mRNA backbone. Located at the interface of the 30S and 50S subunits, it traverses the body of the 30S subunit contacting proteins on the other side and probably holding the rRNA structure together. The combined cluster of proteins S8, S12 and S17 appears to hold together the shoulder and platform of the 30S subunit. This Thermus thermophilus (strain ATCC BAA-163 / DSM 7039 / HB27) protein is Small ribosomal subunit protein uS12 (rpsL).